The sequence spans 551 residues: Rhodopsin kinase grk7-a (551 aa).

Phosphoserine is present on Ser36. The region spanning 57–174 (YQSICVEQPI…QNSPFYDRFL (118 aa)) is the RGS domain. Positions 189–451 (FYEFRILGKG…DDDPRKHAFF (263 aa)) constitute a Protein kinase domain. ATP-binding positions include 195–203 (LGKGGFGEV) and Lys218. Asp314 acts as the Proton acceptor in catalysis. One can recognise an AGC-kinase C-terminal domain in the interval 452–517 (KSINFQRLEA…GAIPISWQKE (66 aa)). Ser487 is modified (phosphoserine). Residues 529 to 551 (DPSREATGGGGNSGEKSGVCSIL) form a disordered region. Low complexity predominate over residues 542–551 (GEKSGVCSIL). Cys548 bears the Cysteine methyl ester mark. Cys548 carries S-geranylgeranyl cysteine lipidation. The propeptide at 549 to 551 (SIL) is removed in mature form.

The protein belongs to the protein kinase superfamily. AGC Ser/Thr protein kinase family. GPRK subfamily. Autophosphorylated in vitro at Ser-487. Phosphorylation at Ser-36 is regulated by light and activated by cAMP.

The protein resides in the membrane. It catalyses the reaction L-threonyl-[rhodopsin] + ATP = O-phospho-L-threonyl-[rhodopsin] + ADP + H(+). The catalysed reaction is L-seryl-[rhodopsin] + ATP = O-phospho-L-seryl-[rhodopsin] + ADP + H(+). Its function is as follows. Retina-specific kinase involved in the shutoff of the photoresponse and adaptation to changing light conditions via cone opsin phosphorylation, including rhodopsin (RHO). This Xenopus laevis (African clawed frog) protein is Rhodopsin kinase grk7-a (grk7-a).